A 345-amino-acid chain; its full sequence is UDP-N-acetylenolpyruvoylglucosamine reductase (345 aa).

The region spanning 16–186 (LPAYASNVIS…VSVGIKLMKS (171 aa)) is the FAD-binding PCMH-type domain. Arg-162 is a catalytic residue. Ser-232 acts as the Proton donor in catalysis. Glu-328 is a catalytic residue.

It belongs to the MurB family. FAD serves as cofactor.

It localises to the cytoplasm. The catalysed reaction is UDP-N-acetyl-alpha-D-muramate + NADP(+) = UDP-N-acetyl-3-O-(1-carboxyvinyl)-alpha-D-glucosamine + NADPH + H(+). It participates in cell wall biogenesis; peptidoglycan biosynthesis. In terms of biological role, cell wall formation. This is UDP-N-acetylenolpyruvoylglucosamine reductase from Yersinia pestis.